Reading from the N-terminus, the 277-residue chain is MSSCSRVALVTGANRGIGLAIARELCRQFSGDVVLTARDVARGQAAVQQLQAEGLSPRFHQLDIDDLQSIRALRDFLRKEYGGLNVLVNNAAVAFKSDDPMPFDIKAEMTLKTNFFATRNMCNELLPIMKPHGRVVNISSLQCLRAFENCSEDLQERFHSETLTEGDLVDLMKKFVEDTKNEVHEREGWPNSPYGVSKLGVTVLSRILARRLDEKRKADRILVNACCPGPVKTDMDGKDSIRTVEEGAETPVYLALLPPDATEPQGQLVHDKVVQNW.

Position 2 is an N-acetylserine (Ser2). NADP(+) is bound by residues 10 to 34 (VTGA…GDVV), 38 to 42 (RDVAR), 63 to 64 (DI), and Asn90. Ser30 is subject to Phosphoserine. Ser140 is a binding site for substrate. Tyr194 acts as the Proton acceptor in catalysis. Residues 194–198 (YGVSK) and Asp239 each bind NADP(+).

The protein belongs to the short-chain dehydrogenases/reductases (SDR) family. In terms of tissue distribution, detected in ovary, pancreas, intestine, colon, kidney, brain, thymus, lung, heart, liver, spleen, leukocyte, prostate and testis.

It localises to the cytoplasm. It carries out the reaction a secondary alcohol + NADP(+) = a ketone + NADPH + H(+). The enzyme catalyses a quinone + NADPH + H(+) = a quinol + NADP(+). Functionally, catalyzes the NADPH-dependent reduction of carbonyl compounds to their corresponding alcohols. Has low NADPH-dependent oxidoreductase activity. Acts on several orthoquinones, acts as well on non-quinone compounds, such as isatin or on the anticancer drug oracin. Best substrates for CBR3 is 1,2- naphthoquinone, hence could play a role in protection against cytotoxicity of exogenous quinones. Exerts activity toward ortho-quinones but not paraquinones. No endogenous substrate for CBR3 except isatin has been identified. The protein is Carbonyl reductase [NADPH] 3 of Homo sapiens (Human).